Reading from the N-terminus, the 299-residue chain is Acetaldehyde dehydrogenase (299 aa).

11 to 14 (SGNI) is a binding site for NAD(+). Cys-126 acts as the Acyl-thioester intermediate in catalysis. NAD(+) contacts are provided by residues 157–165 (SAGPGTRAN) and Asn-267.

The protein belongs to the acetaldehyde dehydrogenase family.

The enzyme catalyses acetaldehyde + NAD(+) + CoA = acetyl-CoA + NADH + H(+). The sequence is that of Acetaldehyde dehydrogenase from Bacillus thuringiensis (strain Al Hakam).